Reading from the N-terminus, the 1269-residue chain is Protein strawberry notch homolog 1 (1269 aa).

The interval 21–47 (NDLFDVDGGDAGLATPTPPSVQQQQPP) is disordered. An N6-acetyllysine modification is found at Lys113. Ser126 and Ser178 each carry phosphoserine. Position 377 is an N6-acetyllysine (Lys377). The segment at 652 to 725 (PSNNSSPRDS…SLITSQDAVE (74 aa)) is disordered. Phosphoserine is present on residues Ser656, Ser657, and Ser661. Residues 679–693 (SGSESDVSDNEESDY) show a composition bias toward acidic residues. Ser700 and Ser701 each carry phosphoserine. Residues 719–746 (TSQDAVERAQQMKKDLLDKLEKLAEDLP) are a coiled coil. Position 1098 is an N6-acetyllysine (Lys1098). Position 1262 is a phosphoserine (Ser1262).

Belongs to the SBNO family.

Its subcellular location is the nucleus. Functionally, plays a crucial role in the regulation of neural stem cells (NSCs) proliferation. Enhances the phosphorylation of GSK3B through the PI3K-Akt signaling pathway, thereby upregulating the Wnt/beta-catenin signaling pathway and promoting the proliferation of NSCs. Improves ischemic stroke recovery while inhibiting neuroinflammation through small extracellular vesicles (sEVs)-mediated mechanism. Enhances the secretion of sEVs from NSCs, which in turn inhibit both the MAPK and NF-kappaB pathways in microglia. This inhibition suppresses the pro-inflammatory M1 polarization of microglia, promoting a shift towards the M2 anti-inflammatory phenotype, which is beneficial for reducing neuroinflammation. This chain is Protein strawberry notch homolog 1 (Sbno1), found in Rattus norvegicus (Rat).